We begin with the raw amino-acid sequence, 206 residues long: Enterobactin synthase component D (206 aa).

D107, E109, and E152 together coordinate Mg(2+).

This sequence belongs to the P-Pant transferase superfamily. EntD family. EntB, EntD, EntE, and EntF form a multienzyme complex called enterobactin synthase. Mg(2+) serves as cofactor.

Its subcellular location is the membrane. The enzyme catalyses apo-[aryl-carrier protein] + CoA = holo-[aryl-carrier protein] + adenosine 3',5'-bisphosphate + H(+). It catalyses the reaction apo-[peptidyl-carrier protein] + CoA = holo-[peptidyl-carrier protein] + adenosine 3',5'-bisphosphate + H(+). It participates in siderophore biosynthesis; enterobactin biosynthesis. Involved in the biosynthesis of the siderophore enterobactin (enterochelin), which is a macrocyclic trimeric lactone of N-(2,3-dihydroxybenzoyl)-serine. The serine trilactone serves as a scaffolding for the three catechol functionalities that provide hexadentate coordination for the tightly ligated iron(2+) atoms. Plays an essential role in the assembly of the enterobactin by catalyzing the transfer of the 4'-phosphopantetheine (Ppant) moiety from coenzyme A to the apo-domains of both EntB (ArCP domain) and EntF (PCP domain) to yield their holo-forms which make them competent for the activation of 2,3-dihydroxybenzoate (DHB) and L-serine, respectively. In Escherichia coli (strain K12), this protein is Enterobactin synthase component D.